A 334-amino-acid polypeptide reads, in one-letter code: uncharacterized protein (334 aa).

This sequence belongs to the PAPS reductase family.

This is an uncharacterized protein from Escherichia phage 186 (Bacteriophage 186).